A 284-amino-acid polypeptide reads, in one-letter code: Bifunctional protein FolD (284 aa).

NADP(+)-binding positions include 166–168 and Ile232; that span reads GAS.

The protein belongs to the tetrahydrofolate dehydrogenase/cyclohydrolase family. As to quaternary structure, homodimer.

The catalysed reaction is (6R)-5,10-methylene-5,6,7,8-tetrahydrofolate + NADP(+) = (6R)-5,10-methenyltetrahydrofolate + NADPH. It carries out the reaction (6R)-5,10-methenyltetrahydrofolate + H2O = (6R)-10-formyltetrahydrofolate + H(+). It participates in one-carbon metabolism; tetrahydrofolate interconversion. Catalyzes the oxidation of 5,10-methylenetetrahydrofolate to 5,10-methenyltetrahydrofolate and then the hydrolysis of 5,10-methenyltetrahydrofolate to 10-formyltetrahydrofolate. This Shewanella sediminis (strain HAW-EB3) protein is Bifunctional protein FolD.